The following is a 75-amino-acid chain: Small ribosomal subunit protein bS18 (75 aa).

Belongs to the bacterial ribosomal protein bS18 family. In terms of assembly, part of the 30S ribosomal subunit. Forms a tight heterodimer with protein bS6.

Its function is as follows. Binds as a heterodimer with protein bS6 to the central domain of the 16S rRNA, where it helps stabilize the platform of the 30S subunit. This Anaplasma marginale (strain St. Maries) protein is Small ribosomal subunit protein bS18.